The primary structure comprises 478 residues: Protein nucleotidyltransferase YdiU (478 aa).

ATP-binding residues include Gly-84, Gly-86, Arg-87, Lys-107, Asp-119, Gly-120, Arg-170, and Arg-177. The active-site Proton acceptor is the Asp-246. Positions 247 and 256 each coordinate Mg(2+). Asp-256 provides a ligand contact to ATP.

Belongs to the SELO family. Mg(2+) is required as a cofactor. Requires Mn(2+) as cofactor.

The catalysed reaction is L-seryl-[protein] + ATP = 3-O-(5'-adenylyl)-L-seryl-[protein] + diphosphate. It catalyses the reaction L-threonyl-[protein] + ATP = 3-O-(5'-adenylyl)-L-threonyl-[protein] + diphosphate. It carries out the reaction L-tyrosyl-[protein] + ATP = O-(5'-adenylyl)-L-tyrosyl-[protein] + diphosphate. The enzyme catalyses L-histidyl-[protein] + UTP = N(tele)-(5'-uridylyl)-L-histidyl-[protein] + diphosphate. The catalysed reaction is L-seryl-[protein] + UTP = O-(5'-uridylyl)-L-seryl-[protein] + diphosphate. It catalyses the reaction L-tyrosyl-[protein] + UTP = O-(5'-uridylyl)-L-tyrosyl-[protein] + diphosphate. Nucleotidyltransferase involved in the post-translational modification of proteins. It can catalyze the addition of adenosine monophosphate (AMP) or uridine monophosphate (UMP) to a protein, resulting in modifications known as AMPylation and UMPylation. In Escherichia coli O17:K52:H18 (strain UMN026 / ExPEC), this protein is Protein nucleotidyltransferase YdiU.